A 629-amino-acid chain; its full sequence is tRNA uridine 5-carboxymethylaminomethyl modification enzyme MnmG (629 aa).

Residues 13–18 (GGGHAG), Val125, and Ser180 contribute to the FAD site. Residue 273–287 (GPRYCPSIEDKVMRF) coordinates NAD(+). Gln370 is an FAD binding site.

The protein belongs to the MnmG family. In terms of assembly, homodimer. Heterotetramer of two MnmE and two MnmG subunits. FAD serves as cofactor.

The protein resides in the cytoplasm. Functionally, NAD-binding protein involved in the addition of a carboxymethylaminomethyl (cmnm) group at the wobble position (U34) of certain tRNAs, forming tRNA-cmnm(5)s(2)U34. The sequence is that of tRNA uridine 5-carboxymethylaminomethyl modification enzyme MnmG from Salmonella dublin (strain CT_02021853).